Consider the following 207-residue polypeptide: Urease accessory protein UreE (207 aa).

The disordered stretch occupies residues 171-207; the sequence is HHGHAHSHSHSHDHDHDHDHDHQHGPGCAHGHGHDHH. Basic and acidic residues predominate over residues 180–194; that stretch reads HSHDHDHDHDHDHQH.

The protein belongs to the UreE family.

Its subcellular location is the cytoplasm. Involved in urease metallocenter assembly. Binds nickel. Probably functions as a nickel donor during metallocenter assembly. This Burkholderia lata (strain ATCC 17760 / DSM 23089 / LMG 22485 / NCIMB 9086 / R18194 / 383) protein is Urease accessory protein UreE.